Here is a 184-residue protein sequence, read N- to C-terminus: Adenylate kinase (184 aa).

ATP is bound at residue 12 to 17 (GAGKGT). The interval 32-61 (STGELLRKEIDLDTDLGKQVKDIMNRGELV) is NMP. AMP-binding positions include Thr33, Arg38, 59–61 (ELV), 85–88 (GYPR), and Gln92. Positions 126–132 (IRGRKDD) are LID. Position 127 (Arg127) interacts with ATP. 2 residues coordinate AMP: Arg129 and Arg140. Residue Gly168 coordinates ATP.

It belongs to the adenylate kinase family. In terms of assembly, monomer.

It localises to the cytoplasm. The catalysed reaction is AMP + ATP = 2 ADP. It functions in the pathway purine metabolism; AMP biosynthesis via salvage pathway; AMP from ADP: step 1/1. Functionally, catalyzes the reversible transfer of the terminal phosphate group between ATP and AMP. Plays an important role in cellular energy homeostasis and in adenine nucleotide metabolism. This Prochlorococcus marinus subsp. pastoris (strain CCMP1986 / NIES-2087 / MED4) protein is Adenylate kinase.